The following is a 644-amino-acid chain: Uromodulin (644 aa).

The N-terminal stretch at 1-26 (MGQLLSLTWLLLVMVVTPWFTVAGAN) is a signal peptide. Positions 30-66 (EARRCSECHDNATCVLDGVVTTCSCQAGFTGDGLVCE) constitute an EGF-like 1 domain. Disulfide bonds link Cys34–Cys43, Cys37–Cys52, Cys54–Cys65, Cys71–Cys84, Cys79–Cys93, Cys95–Cys107, Cys113–Cys127, Cys121–Cys136, Cys138–Cys149, Cys151–Cys162, Cys156–Cys173, Cys177–Cys270, Cys198–Cys285, Cys220–Cys258, Cys226–Cys290, Cys251–Cys259, Cys300–Cys309, Cys303–Cys318, Cys320–Cys350, Cys338–Cys428, and Cys369–Cys392. Asn40 carries N-linked (GlcNAc...) asparagine glycosylation. Positions 67 to 108 (DIDECATPWTHNCSNSICMNTLGSYECSCQDGFRLTPGLGCI) constitute an EGF-like 2; calcium-binding domain. The N-linked (GlcNAc...) asparagine glycan is linked to Asn78. The EGF-like 3; calcium-binding domain maps to 109 to 150 (DVNECTEQGLSNCHSLATCVNTEGSYSCVCPKGYRGDGWYCE). A beta hairpin region spans residues 151–174 (CSPGFCEPGLDCLPQGPSGKLVCQ). The tract at residues 175 to 294 (DPCNVYETLT…CNLAYCTDPS (120 aa)) is D10C. Residue Asn235 is glycosylated (N-linked (GlcNAc...) asparagine). Asn278 carries an N-linked (GlcNAc...) asparagine glycan. Residues 295–326 (SVEGTCEECGVDEDCVSDNGRWRCQCKQDFNV) enclose the EGF-like 4 domain. N-linked (GlcNAc...) asparagine glycosylation is present at Asn325. Residues 337 to 432 (ECEANEIKIS…RINFECSYPL (96 aa)) form a ZP-N region. The ZP domain maps to 337 to 592 (ECEANEIKIS…PTCSGTRYRS (256 aa)). Asn399 and Asn450 each carry an N-linked (GlcNAc...) asparagine glycan. Residues 433–456 (DMKVSLKTSLQPMVSALNISLGGT) are flexible ZP-N/ZP-C linker; important for secretion and polymerization into filaments. The interval 457 to 467 (GKFTVQMALFQ) is internal hydrophobic patch (IHP). Residues 457-592 (GKFTVQMALF…PTCSGTRYRS (136 aa)) form a ZP-C region. 3 disulfides stabilise this stretch: Cys509/Cys569, Cys530/Cys585, and Cys574/Cys581. Asn516 carries N-linked (GlcNAc...) asparagine glycosylation. Residues 589 to 592 (RYRS) are essential for cleavage by HPN. Residues 601 to 609 (VLNLGPITR) form an external hydrophobic patch (EHP); regulates polymerization into filaments region. A lipid anchor (GPI-anchor amidated serine) is attached at Ser615. A propeptide spans 616-644 (VSKAASSNLGFLSIWLLLFLSATLTLMVH) (removed in mature form).

As to quaternary structure, homodimer that then polymerizes into long filaments. The filaments can additionally assemble laterally to form a sheet. The filaments consist of a zigzag-shaped backbone with laterally protruding arms which interact with bacterial adhesin fimH. Two fimH molecules can bind to a single UMOD monomer. Post-translationally, N-glycosylated. Proteolytically cleaved at a conserved C-terminal proteolytic cleavage site to generate the secreted form found in urine. This cleavage is catalyzed by HPN. Expression restricted to the thick ascending limb of the loop of Henle (TALH).

The protein localises to the apical cell membrane. It is found in the basolateral cell membrane. Its subcellular location is the cell projection. The protein resides in the cilium membrane. It localises to the secreted. Functions in biogenesis and organization of the apical membrane of epithelial cells of the thick ascending limb of Henle's loop (TALH), where it promotes formation of complex filamentous gel-like structure that may play a role in the water barrier permeability. May serve as a receptor for binding and endocytosis of cytokines (IL-1, IL-2) and TNF. Facilitates neutrophil migration across renal epithelia. Functionally, in the urine, may contribute to colloid osmotic pressure, retards passage of positively charged electrolytes, and inhibits formation of liquid containing supersaturated salts and subsequent formation of salt crystals. Protects against urinary tract infections by binding to type 1 fimbriated E.coli. Binds to bacterial adhesin fimH which mediates the stable formation of bacterial aggregates, prevents the binding of E.coli to uroplakins UPK1A and UPK1B which act as urothelial receptors for type I fimbriae, and allows for pathogen clearance through micturation. Also promotes aggregation of other bacteria including K.pneumoniae, P.aeruginosa and S.mitis and so may also protect against other uropathogens. The protein is Uromodulin (Umod) of Rattus norvegicus (Rat).